The following is a 790-amino-acid chain: LMBR1 domain-containing protein 2 homolog B (790 aa).

A compositionally biased stretch (low complexity) spans 1–21; the sequence is MSSNTTTPTPTSTPTPTSSPS. Residues 1–22 are disordered; it reads MSSNTTTPTPTSTPTPTSSPSI. A run of 5 helical transmembrane segments spans residues 34 to 54, 66 to 86, 128 to 148, 167 to 187, and 195 to 215; these read FGNLLFFAISLVLCGVVVLIG, IYATFFSFLGWFMCFSIAYLV, FLYFGSLILCWVIFPVLQSFS, VILYTFMFIAGLIGIIVILSV, and FLSFVMLLANVYGVILITITM. Residues 236 to 266 are a coiled coil; the sequence is LRNYRVEAVVLKTELEDVKRQLIDHLKLIKT. The next 3 membrane-spanning stretches (helical) occupy residues 401 to 421, 442 to 462, and 539 to 559; these read FIIAGLVCVCLSGIILWSEIV, PGIGLQIFCFIPMIYMCVCSY, and FTLFFPIFMIVVCVISFFNLH. Disordered regions lie at residues 630–665, 701–751, and 765–790; these read SQLDGASGAHREPSIDSSNRYKPTPTKTSINIPKLS, LGEK…TKDK, and SFQDDDDHTFDDIEMGAYGTGRKNKK. Positions 644–665 are enriched in polar residues; the sequence is IDSSNRYKPTPTKTSINIPKLS. A compositionally biased stretch (low complexity) spans 706–734; it reads NASNNNNNNNNNNNNNNSNNKNSNNNNNS. Residues 735–746 are compositionally biased toward polar residues; it reads ILTSNYESYSTP. A compositionally biased stretch (acidic residues) spans 766 to 778; the sequence is FQDDDDHTFDDIE.

It belongs to the LIMR family.

The protein resides in the membrane. This Dictyostelium discoideum (Social amoeba) protein is LMBR1 domain-containing protein 2 homolog B.